A 174-amino-acid polypeptide reads, in one-letter code: RNA pyrophosphohydrolase (174 aa).

Residues 6–149 form the Nudix hydrolase domain; that stretch reads GYRPNVGIIL…KRDVYLEALK (144 aa). The Nudix box signature appears at 38–59; that stretch reads GGIKPGESPETAMYRELYEEVG.

Belongs to the Nudix hydrolase family. RppH subfamily. The cofactor is a divalent metal cation.

Its function is as follows. Accelerates the degradation of transcripts by removing pyrophosphate from the 5'-end of triphosphorylated RNA, leading to a more labile monophosphorylated state that can stimulate subsequent ribonuclease cleavage. In Neisseria gonorrhoeae (strain ATCC 700825 / FA 1090), this protein is RNA pyrophosphohydrolase.